A 419-amino-acid polypeptide reads, in one-letter code: Maltoporin 2 (419 aa).

Residues 1-23 (MKTSLRTLSVALAAALVSPSVLA) form the signal peptide.

This sequence belongs to the porin LamB (TC 1.B.3) family. In terms of assembly, homotrimer formed of three 18-stranded antiparallel beta-barrels, containing three independent channels.

It localises to the cell outer membrane. The enzyme catalyses beta-maltose(in) = beta-maltose(out). Involved in the transport of maltose and maltodextrins. The chain is Maltoporin 2 from Yersinia pseudotuberculosis serotype O:1b (strain IP 31758).